A 127-amino-acid chain; its full sequence is Small ribosomal subunit protein uS11 (127 aa).

Belongs to the universal ribosomal protein uS11 family. As to quaternary structure, part of the 30S ribosomal subunit. Interacts with proteins S7 and S18. Binds to IF-3.

Its function is as follows. Located on the platform of the 30S subunit, it bridges several disparate RNA helices of the 16S rRNA. Forms part of the Shine-Dalgarno cleft in the 70S ribosome. The sequence is that of Small ribosomal subunit protein uS11 from Ruthia magnifica subsp. Calyptogena magnifica.